The sequence spans 148 residues: FAD synthase (148 aa).

ATP-binding positions include 14–15, 19–22, and Asp-100; these read VF and HVGH.

Belongs to the archaeal FAD synthase family. Homodimer. Requires a divalent metal cation as cofactor.

It carries out the reaction FMN + ATP + H(+) = FAD + diphosphate. Its pathway is cofactor biosynthesis; FAD biosynthesis; FAD from FMN: step 1/1. In terms of biological role, catalyzes the transfer of the AMP portion of ATP to flavin mononucleotide (FMN) to produce flavin adenine dinucleotide (FAD) coenzyme. This chain is FAD synthase, found in Pyrococcus abyssi (strain GE5 / Orsay).